The chain runs to 116 residues: Large ribosomal subunit protein uL22 (116 aa).

It belongs to the universal ribosomal protein uL22 family. As to quaternary structure, part of the 50S ribosomal subunit.

Its function is as follows. This protein binds specifically to 23S rRNA; its binding is stimulated by other ribosomal proteins, e.g. L4, L17, and L20. It is important during the early stages of 50S assembly. It makes multiple contacts with different domains of the 23S rRNA in the assembled 50S subunit and ribosome. Functionally, the globular domain of the protein is located near the polypeptide exit tunnel on the outside of the subunit, while an extended beta-hairpin is found that lines the wall of the exit tunnel in the center of the 70S ribosome. The protein is Large ribosomal subunit protein uL22 of Orientia tsutsugamushi (strain Boryong) (Rickettsia tsutsugamushi).